The chain runs to 320 residues: GTPase Era (320 aa).

One can recognise an Era-type G domain in the interval 25–193; sequence HCGFIAIVGR…RKHVRNHLPK (169 aa). The G1 stretch occupies residues 33–40; it reads GRPNVGKS. 33-40 contacts GTP; that stretch reads GRPNVGKS. The G2 stretch occupies residues 59-63; sequence QTTRH. A G3 region spans residues 80–83; it reads DTPG. GTP is bound by residues 80–84 and 142–145; these read DTPGL and NKVD. The segment at 142–145 is G4; that stretch reads NKVD. Positions 172 to 174 are G5; the sequence is ISA. The KH type-2 domain maps to 216-302; it reads VREKLMRFTG…YLETWVKVKS (87 aa).

This sequence belongs to the TRAFAC class TrmE-Era-EngA-EngB-Septin-like GTPase superfamily. Era GTPase family. As to quaternary structure, monomer.

Its subcellular location is the cytoplasm. The protein localises to the cell inner membrane. An essential GTPase that binds both GDP and GTP, with rapid nucleotide exchange. Plays a role in 16S rRNA processing and 30S ribosomal subunit biogenesis and possibly also in cell cycle regulation and energy metabolism. In Vibrio parahaemolyticus serotype O3:K6 (strain RIMD 2210633), this protein is GTPase Era.